The following is a 152-amino-acid chain: Nucleoside diphosphate kinase (152 aa).

6 residues coordinate ATP: Lys-11, Phe-59, Arg-87, Thr-93, Arg-104, and Asn-114. The active-site Pros-phosphohistidine intermediate is His-117.

It belongs to the NDK family. In terms of assembly, homotetramer. The cofactor is Mg(2+).

It is found in the cytoplasm. The enzyme catalyses a 2'-deoxyribonucleoside 5'-diphosphate + ATP = a 2'-deoxyribonucleoside 5'-triphosphate + ADP. It catalyses the reaction a ribonucleoside 5'-diphosphate + ATP = a ribonucleoside 5'-triphosphate + ADP. Its function is as follows. Major role in the synthesis of nucleoside triphosphates other than ATP. The ATP gamma phosphate is transferred to the NDP beta phosphate via a ping-pong mechanism, using a phosphorylated active-site intermediate. This Prochlorococcus marinus (strain AS9601) protein is Nucleoside diphosphate kinase.